Consider the following 290-residue polypeptide: ATP phosphoribosyltransferase (290 aa).

It belongs to the ATP phosphoribosyltransferase family. Long subfamily. Requires Mg(2+) as cofactor.

Its subcellular location is the cytoplasm. The enzyme catalyses 1-(5-phospho-beta-D-ribosyl)-ATP + diphosphate = 5-phospho-alpha-D-ribose 1-diphosphate + ATP. It participates in amino-acid biosynthesis; L-histidine biosynthesis; L-histidine from 5-phospho-alpha-D-ribose 1-diphosphate: step 1/9. Feedback inhibited by histidine. Its function is as follows. Catalyzes the condensation of ATP and 5-phosphoribose 1-diphosphate to form N'-(5'-phosphoribosyl)-ATP (PR-ATP). Has a crucial role in the pathway because the rate of histidine biosynthesis seems to be controlled primarily by regulation of HisG enzymatic activity. The polypeptide is ATP phosphoribosyltransferase (hisG) (Saccharolobus solfataricus (strain ATCC 35092 / DSM 1617 / JCM 11322 / P2) (Sulfolobus solfataricus)).